The following is a 128-amino-acid chain: Large ribosomal subunit protein bL19 (128 aa).

Belongs to the bacterial ribosomal protein bL19 family.

Functionally, this protein is located at the 30S-50S ribosomal subunit interface and may play a role in the structure and function of the aminoacyl-tRNA binding site. This is Large ribosomal subunit protein bL19 from Verminephrobacter eiseniae (strain EF01-2).